Consider the following 261-residue polypeptide: Proliferating cell nuclear antigen (261 aa).

The segment at 7–100 is interaction with NUDT15; the sequence is VQGSILKKVL…RAEDNADTLA (94 aa). An N6-acetyllysine mark is found at Lys-14, Lys-77, and Lys-80. Residues 61 to 80 mediate DNA binding; sequence RCDRNLAMGVNLTSMSKILK. A disulfide bond links Cys-135 and Cys-162. Residue Lys-164 forms a Glycyl lysine isopeptide (Lys-Gly) (interchain with G-Cter in SUMO2); alternate linkage. Lys-164 is covalently cross-linked (Glycyl lysine isopeptide (Lys-Gly) (interchain with G-Cter in ubiquitin); alternate). At Tyr-211 the chain carries Phosphotyrosine; by EGFR. Lys-248 is subject to N6-acetyllysine. A Glycyl lysine isopeptide (Lys-Gly) (interchain with G-Cter in SUMO2) cross-link involves residue Lys-254.

It belongs to the PCNA family. In terms of assembly, homotrimer. Interacts with p300/EP300; the interaction occurs on chromatin in UV-irradiated damaged cells. Interacts with CREBBP (via transactivation domain and C-terminus); the interaction occurs on chromatin in UV-irradiated damaged cells. Directly interacts with POLD1, POLD3 and POLD4 subunits of the DNA polymerase delta complex, POLD3 being the major interacting partner; the interaction with POLD3 is inhibited by CDKN1A/p21(CIP1). Forms a complex with activator 1 heteropentamer in the presence of ATP. Interacts with EXO1, POLH, POLK, DNMT1, ERCC5, FEN1, CDC6 and POLDIP2. Interacts with POLB. Interacts with APEX2; this interaction is triggered by reactive oxygen species and increased by misincorporation of uracil in nuclear DNA. Forms a ternary complex with DNTTIP2 and core histone. Interacts with KCTD10 and PPP1R15A. Interacts with SMARCA5/SNF2H. Interacts with BAZ1B/WSTF; the interaction is direct and is required for BAZ1B/WSTF binding to replication foci during S phase. Interacts with HLTF and SHPRH. Interacts with NUDT15; this interaction is disrupted in response to UV irradiation and acetylation. Interacts with CDKN1A/p21(CIP1) and CDT1; interacts via their PIP-box which also recruits the DCX(DTL) complex. The interaction with CDKN1A inhibits POLD3 binding. Interacts with DDX11. Interacts with EGFR; positively regulates PCNA. Interacts with PARPBP. Interacts (when ubiquitinated) with SPRTN; leading to enhance RAD18-mediated PCNA ubiquitination. Interacts (when polyubiquitinated) with ZRANB3. Interacts with SMARCAD1. Interacts with CDKN1C. Interacts with PCLAF (via PIP-box). Interacts with RTEL1 (via PIP-box); the interaction is direct and essential for the suppression of telomere fragility. Interacts with FAM111A (via PIP-box); the interaction is direct and required for PCNA loading on chromatin binding. Interacts with LIG1. Interacts with SETMAR. Interacts with ANKRD17. Interacts with FBXO18/FBH1 (via PIP-box); the interaction recruits the DCX(DTL) complex and promotes ubiquitination and degradation of FBXO18/FBH1. Interacts with POLN. Interacts with SDE2 (via PIP-box); the interaction is direct and prevents ultraviolet light induced monoubiquitination. Component of the replisome complex composed of at least DONSON, MCM2, MCM7, PCNA and TICRR; interaction at least with PCNA occurs during DNA replication. Interacts with MAPK15; the interaction is chromatin binding dependent and prevents MDM2-mediated PCNA destruction by inhibiting the association of PCNA with MDM2. Interacts with PARP10 (via PIP-box). Interacts with DDI2. Interacts with HMCES (via PIP-box). Interacts with TRAIP (via PIP-box). Interacts with UHRF2. Interacts with ALKBH2; this interaction is enhanced during the S-phase of the cell cycle. Interacts with ATAD5; the interaction promotes USP1-mediated PCNA deubiquitination. Interacts with DNA damage up-regulated protein DDUP. Interacts (when phosphorylated) with GRB2. Interacts with ANG. Interacts with nuclear UNG (isoform 2); this interaction mediates UNG recruitment to S-phase replication foci. Interacts with ERCC6L2 (via an atypical PIP-box); this interaction facilitates cenrtomeric localization of ERCC6L2. As to quaternary structure, (Microbial infection) Interacts with herpes virus 8 protein LANA1. In terms of processing, phosphorylated. Phosphorylation at Tyr-211 by EGFR stabilizes chromatin-associated PCNA. Post-translationally, acetylated by CREBBP and p300/EP300; preferentially acetylated by CREBBP on Lys-80, Lys-13 and Lys-14 and on Lys-77 by p300/EP300 upon loading on chromatin in response to UV irradiation. Lysine acetylation disrupts association with chromatin, hence promoting PCNA ubiquitination and proteasomal degradation in response to UV damage in a CREBBP- and EP300-dependent manner. Acetylation disrupts interaction with NUDT15 and promotes degradation. Ubiquitinated. Following DNA damage, can be either monoubiquitinated to stimulate direct bypass of DNA lesions by specialized DNA polymerases or polyubiquitinated to promote recombination-dependent DNA synthesis across DNA lesions by template switching mechanisms. Following induction of replication stress, monoubiquitinated by the UBE2B-RAD18 complex on Lys-164, leading to recruit translesion (TLS) polymerases, which are able to synthesize across DNA lesions in a potentially error-prone manner. An error-free pathway also exists and requires non-canonical polyubiquitination on Lys-164 through 'Lys-63' linkage of ubiquitin moieties by the E2 complex UBE2N-UBE2V2 and the E3 ligases, HLTF, RNF8 and SHPRH. This error-free pathway, also known as template switching, employs recombination mechanisms to synthesize across the lesion, using as a template the undamaged, newly synthesized strand of the sister chromatid. Monoubiquitination at Lys-164 also takes place in undamaged proliferating cells, and is mediated by the DCX(DTL) complex, leading to enhance PCNA-dependent translesion DNA synthesis. Sumoylated during S phase. In terms of processing, methylated on glutamate residues by ARMT1/C6orf211.

Its subcellular location is the nucleus. Its function is as follows. Auxiliary protein of DNA polymerase delta and epsilon, is involved in the control of eukaryotic DNA replication by increasing the polymerase's processibility during elongation of the leading strand. Induces a robust stimulatory effect on the 3'-5' exonuclease and 3'-phosphodiesterase, but not apurinic-apyrimidinic (AP) endonuclease, APEX2 activities. Has to be loaded onto DNA in order to be able to stimulate APEX2. Plays a key role in DNA damage response (DDR) by being conveniently positioned at the replication fork to coordinate DNA replication with DNA repair and DNA damage tolerance pathways. Acts as a loading platform to recruit DDR proteins that allow completion of DNA replication after DNA damage and promote postreplication repair: Monoubiquitinated PCNA leads to recruitment of translesion (TLS) polymerases, while 'Lys-63'-linked polyubiquitination of PCNA is involved in error-free pathway and employs recombination mechanisms to synthesize across the lesion. In Homo sapiens (Human), this protein is Proliferating cell nuclear antigen (PCNA).